The primary structure comprises 374 residues: Chaperone protein DnaJ (374 aa).

The J domain maps to 5–70 (DYYDVLGVAK…DKRAAYDRFG (66 aa)). A CR-type zinc finger spans residues 131–209 (GCEEKIRIPT…CHGQGRVQEY (79 aa)). Residues cysteine 144, cysteine 147, cysteine 161, cysteine 164, cysteine 183, cysteine 186, cysteine 197, and cysteine 200 each contribute to the Zn(2+) site. 4 CXXCXGXG motif repeats span residues 144-151 (CKTCDGSG), 161-168 (CGTCGGAG), 183-190 (CPECHGAG), and 197-204 (CRDCHGQG).

This sequence belongs to the DnaJ family. In terms of assembly, homodimer. It depends on Zn(2+) as a cofactor.

The protein localises to the cytoplasm. Its function is as follows. Participates actively in the response to hyperosmotic and heat shock by preventing the aggregation of stress-denatured proteins and by disaggregating proteins, also in an autonomous, DnaK-independent fashion. Unfolded proteins bind initially to DnaJ; upon interaction with the DnaJ-bound protein, DnaK hydrolyzes its bound ATP, resulting in the formation of a stable complex. GrpE releases ADP from DnaK; ATP binding to DnaK triggers the release of the substrate protein, thus completing the reaction cycle. Several rounds of ATP-dependent interactions between DnaJ, DnaK and GrpE are required for fully efficient folding. Also involved, together with DnaK and GrpE, in the DNA replication of plasmids through activation of initiation proteins. In Marinomonas sp. (strain MWYL1), this protein is Chaperone protein DnaJ.